The chain runs to 264 residues: Thiazole synthase (264 aa).

The active-site Schiff-base intermediate with DXP is lysine 106. 1-deoxy-D-xylulose 5-phosphate contacts are provided by residues glycine 167, 193–194 (AG), and 215–216 (NT).

It belongs to the ThiG family. In terms of assembly, homotetramer. Forms heterodimers with either ThiH or ThiS.

It is found in the cytoplasm. The catalysed reaction is [ThiS sulfur-carrier protein]-C-terminal-Gly-aminoethanethioate + 2-iminoacetate + 1-deoxy-D-xylulose 5-phosphate = [ThiS sulfur-carrier protein]-C-terminal Gly-Gly + 2-[(2R,5Z)-2-carboxy-4-methylthiazol-5(2H)-ylidene]ethyl phosphate + 2 H2O + H(+). Its pathway is cofactor biosynthesis; thiamine diphosphate biosynthesis. Catalyzes the rearrangement of 1-deoxy-D-xylulose 5-phosphate (DXP) to produce the thiazole phosphate moiety of thiamine. Sulfur is provided by the thiocarboxylate moiety of the carrier protein ThiS. In vitro, sulfur can be provided by H(2)S. This is Thiazole synthase from Xanthomonas campestris pv. campestris (strain 8004).